The sequence spans 100 residues: Small ribosomal subunit protein uS14c (100 aa).

The protein belongs to the universal ribosomal protein uS14 family. Part of the 30S ribosomal subunit.

It is found in the plastid. The protein resides in the chloroplast. Binds 16S rRNA, required for the assembly of 30S particles. The sequence is that of Small ribosomal subunit protein uS14c from Phalaenopsis aphrodite subsp. formosana (Moth orchid).